Here is a 322-residue protein sequence, read N- to C-terminus: uncharacterized protein (322 aa).

Composition is skewed to basic residues over residues 1-16 (MPGN…KSGT) and 43-61 (LRPH…RRPV). The tract at residues 1–69 (MPGNSRRRGA…PVKRADETET (69 aa)) is disordered. S-adenosyl-L-methionine is bound by residues Gly-261, Ile-281, and Leu-290.

It belongs to the class IV-like SAM-binding methyltransferase superfamily. RNA methyltransferase TrmH family.

This is an uncharacterized protein from Mycobacterium bovis (strain ATCC BAA-935 / AF2122/97).